A 179-amino-acid polypeptide reads, in one-letter code: CDP-archaeol synthase (179 aa).

A run of 4 helical transmembrane segments spans residues Phe53 to Leu73, Phe88 to Ile108, Phe120 to Pro140, and Leu145 to Ile165.

Belongs to the CDP-archaeol synthase family. Requires Mg(2+) as cofactor.

It localises to the cell membrane. The enzyme catalyses 2,3-bis-O-(geranylgeranyl)-sn-glycerol 1-phosphate + CTP + H(+) = CDP-2,3-bis-O-(geranylgeranyl)-sn-glycerol + diphosphate. Its pathway is membrane lipid metabolism; glycerophospholipid metabolism. Catalyzes the formation of CDP-2,3-bis-(O-geranylgeranyl)-sn-glycerol (CDP-archaeol) from 2,3-bis-(O-geranylgeranyl)-sn-glycerol 1-phosphate (DGGGP) and CTP. This reaction is the third ether-bond-formation step in the biosynthesis of archaeal membrane lipids. Can use CTP or dCTP, but not ATP, GTP or TTP. The protein is CDP-archaeol synthase of Archaeoglobus fulgidus (strain ATCC 49558 / DSM 4304 / JCM 9628 / NBRC 100126 / VC-16).